The primary structure comprises 223 residues: 2-C-methyl-D-erythritol 4-phosphate cytidylyltransferase (223 aa).

Belongs to the IspD/TarI cytidylyltransferase family. IspD subfamily.

The catalysed reaction is 2-C-methyl-D-erythritol 4-phosphate + CTP + H(+) = 4-CDP-2-C-methyl-D-erythritol + diphosphate. It participates in isoprenoid biosynthesis; isopentenyl diphosphate biosynthesis via DXP pathway; isopentenyl diphosphate from 1-deoxy-D-xylulose 5-phosphate: step 2/6. Catalyzes the formation of 4-diphosphocytidyl-2-C-methyl-D-erythritol from CTP and 2-C-methyl-D-erythritol 4-phosphate (MEP). This Prochlorococcus marinus (strain AS9601) protein is 2-C-methyl-D-erythritol 4-phosphate cytidylyltransferase.